Reading from the N-terminus, the 159-residue chain is Transcription antitermination protein NusB (159 aa).

This sequence belongs to the NusB family.

Functionally, involved in transcription antitermination. Required for transcription of ribosomal RNA (rRNA) genes. Binds specifically to the boxA antiterminator sequence of the ribosomal RNA (rrn) operons. The chain is Transcription antitermination protein NusB from Stenotrophomonas maltophilia (strain K279a).